We begin with the raw amino-acid sequence, 134 residues long: Holo-[acyl-carrier-protein] synthase (134 aa).

2 residues coordinate Mg(2+): aspartate 8 and glutamate 57.

This sequence belongs to the P-Pant transferase superfamily. AcpS family. Mg(2+) is required as a cofactor.

Its subcellular location is the cytoplasm. It carries out the reaction apo-[ACP] + CoA = holo-[ACP] + adenosine 3',5'-bisphosphate + H(+). Transfers the 4'-phosphopantetheine moiety from coenzyme A to a Ser of acyl-carrier-protein. This Rhizobium rhizogenes (strain K84 / ATCC BAA-868) (Agrobacterium radiobacter) protein is Holo-[acyl-carrier-protein] synthase.